A 217-amino-acid chain; its full sequence is Probable GTP-binding protein EngB (217 aa).

In terms of domain architecture, EngB-type G spans 33–217 (GPAEIAFAGR…RITIEQAVAR (185 aa)). GTP-binding positions include 41 to 48 (GRSNVGKS), 68 to 72 (GRTQE), 95 to 98 (DMPG), 162 to 165 (TKTD), and 196 to 198 (TSS). Serine 48 and threonine 70 together coordinate Mg(2+).

It belongs to the TRAFAC class TrmE-Era-EngA-EngB-Septin-like GTPase superfamily. EngB GTPase family. Mg(2+) serves as cofactor.

In terms of biological role, necessary for normal cell division and for the maintenance of normal septation. The chain is Probable GTP-binding protein EngB from Sinorhizobium fredii (strain NBRC 101917 / NGR234).